The sequence spans 520 residues: Putative cytochrome P450 CYP13A3 (520 aa).

Heme is bound at residue Cys464.

It belongs to the cytochrome P450 family. The cofactor is heme.

In terms of biological role, cytochromes P450 are a group of heme-thiolate monooxygenases. They oxidize a variety of structurally unrelated compounds, including steroids, fatty acids, and xenobiotics. The chain is Putative cytochrome P450 CYP13A3 (cyp-13A3) from Caenorhabditis elegans.